A 420-amino-acid polypeptide reads, in one-letter code: Cysteate-C-fatty acyltransferase (420 aa).

Pyridoxal 5'-phosphate is bound by residues 114 to 115 (GY), histidine 219, threonine 247, and alanine 249. Lysine 250 is modified (N6-(pyridoxal phosphate)lysine).

This sequence belongs to the class-II pyridoxal-phosphate-dependent aminotransferase family. Requires pyridoxal 5'-phosphate as cofactor.

It catalyses the reaction isopentadecanoyl-CoA + L-cysteate + H(+) = 3-oxocapnine + CO2 + CoA. It participates in lipid metabolism. Functionally, transferase involved in the biosynthesis of capnine, a sulfonolipid present in the outer membrane of gliding Bacteroidetes and essential for gliding motility. Catalyzes the formation of 3-dehydrocapnine from cysteate and isopentadecanoyl-CoA (13-methyl-myristoyl-CoA). In vitro, products are also detected when 13-methyl-myristic acid is substituted with tridecylic acid, myristic acid, pentadecanoic acid or palmitic acid. The polypeptide is Cysteate-C-fatty acyltransferase (Capnocytophaga ochracea (strain ATCC 27872 / DSM 7271 / CCUG 9716 / JCM 12966 / NCTC 12371 / SS31 / VPI 2845) (Bacteroides ochraceus)).